Consider the following 266-residue polypeptide: NAD kinase 2 (266 aa).

Catalysis depends on D51, which acts as the Proton acceptor. Residues 51-52 (DG), 123-124 (NE), R150, D152, 163-168 (TGYSKS), and A187 each bind NAD(+).

The protein belongs to the NAD kinase family. It depends on a divalent metal cation as a cofactor.

It is found in the cytoplasm. It carries out the reaction NAD(+) + ATP = ADP + NADP(+) + H(+). Functionally, involved in the regulation of the intracellular balance of NAD and NADP, and is a key enzyme in the biosynthesis of NADP. Catalyzes specifically the phosphorylation on 2'-hydroxyl of the adenosine moiety of NAD to yield NADP. The sequence is that of NAD kinase 2 from Oceanobacillus iheyensis (strain DSM 14371 / CIP 107618 / JCM 11309 / KCTC 3954 / HTE831).